A 238-amino-acid chain; its full sequence is Ribonuclease PH (238 aa).

Phosphate is bound by residues R86 and 124 to 126 (GTR).

It belongs to the RNase PH family. Homohexameric ring arranged as a trimer of dimers.

The enzyme catalyses tRNA(n+1) + phosphate = tRNA(n) + a ribonucleoside 5'-diphosphate. In terms of biological role, phosphorolytic 3'-5' exoribonuclease that plays an important role in tRNA 3'-end maturation. Removes nucleotide residues following the 3'-CCA terminus of tRNAs; can also add nucleotides to the ends of RNA molecules by using nucleoside diphosphates as substrates, but this may not be physiologically important. Probably plays a role in initiation of 16S rRNA degradation (leading to ribosome degradation) during starvation. This chain is Ribonuclease PH, found in Pectobacterium atrosepticum (strain SCRI 1043 / ATCC BAA-672) (Erwinia carotovora subsp. atroseptica).